The sequence spans 298 residues: Putative cysteine protease YopT-like blr2058 (298 aa).

Residues Met-1 to Gln-14 are compositionally biased toward basic and acidic residues. Disordered stretches follow at residues Met-1–Ser-25 and Ser-59–Ser-80. Residues Ser-65–Ser-80 are compositionally biased toward low complexity. The active site involves Cys-109. The span at Asn-137–Gly-162 shows a compositional bias: basic and acidic residues. Residues Asn-137 to Phe-166 form a disordered region. Active-site residues include His-223 and Asp-238.

The protein belongs to the peptidase C58 family.

Its function is as follows. Potential cysteine protease, which may play a central role after invasion of host cell. This is Putative cysteine protease YopT-like blr2058 from Bradyrhizobium diazoefficiens (strain JCM 10833 / BCRC 13528 / IAM 13628 / NBRC 14792 / USDA 110).